Here is a 353-residue protein sequence, read N- to C-terminus: Photosystem II D2 protein (353 aa).

T2 carries the N-acetylthreonine modification. At T2 the chain carries Phosphothreonine. A helical membrane pass occupies residues 41–61 (CAYFALGGWFTGTTFVTSWYT). H118 lines the chlorophyll a pocket. The helical transmembrane segment at 125–141 (GFMLRQFELARSVQLRP) threads the bilayer. Pheophytin a is bound by residues Q130 and N143. Residues 153 to 166 (VFVSVFLIYPLGQS) traverse the membrane as a helical segment. H198 is a binding site for chlorophyll a. Residues 208 to 228 (AALLCAIHGATVENTLFEDGD) traverse the membrane as a helical segment. A plastoquinone-binding residues include H215 and F262. H215 is a Fe cation binding site. H269 is a binding site for Fe cation. A helical membrane pass occupies residues 279–295 (GLWMSALGVVGLALNLR).

This sequence belongs to the reaction center PufL/M/PsbA/D family. In terms of assembly, PSII is composed of 1 copy each of membrane proteins PsbA, PsbB, PsbC, PsbD, PsbE, PsbF, PsbH, PsbI, PsbJ, PsbK, PsbL, PsbM, PsbT, PsbX, PsbY, PsbZ, Psb30/Ycf12, at least 3 peripheral proteins of the oxygen-evolving complex and a large number of cofactors. It forms dimeric complexes. Requires The D1/D2 heterodimer binds P680, chlorophylls that are the primary electron donor of PSII, and subsequent electron acceptors. It shares a non-heme iron and each subunit binds pheophytin, quinone, additional chlorophylls, carotenoids and lipids. There is also a Cl(-1) ion associated with D1 and D2, which is required for oxygen evolution. The PSII complex binds additional chlorophylls, carotenoids and specific lipids. as cofactor.

Its subcellular location is the plastid. The protein resides in the chloroplast thylakoid membrane. The enzyme catalyses 2 a plastoquinone + 4 hnu + 2 H2O = 2 a plastoquinol + O2. Functionally, photosystem II (PSII) is a light-driven water:plastoquinone oxidoreductase that uses light energy to abstract electrons from H(2)O, generating O(2) and a proton gradient subsequently used for ATP formation. It consists of a core antenna complex that captures photons, and an electron transfer chain that converts photonic excitation into a charge separation. The D1/D2 (PsbA/PsbD) reaction center heterodimer binds P680, the primary electron donor of PSII as well as several subsequent electron acceptors. D2 is needed for assembly of a stable PSII complex. This is Photosystem II D2 protein from Nymphaea alba (White water-lily).